Reading from the N-terminus, the 200-residue chain is Transcription elongation factor A protein-like 3 (200 aa).

Positions 1 to 19 (MEEVRGENEGKLEKEGKPE) are enriched in basic and acidic residues. The disordered stretch occupies residues 1–200 (MEEVRGENEG…QRGLHDIPYL (200 aa)). Residues 20–34 (DEVEPEDEEKSDEDE) show a composition bias toward acidic residues. Ser30 carries the post-translational modification Phosphoserine. Basic and acidic residues-rich tracts occupy residues 47-85 (GKPE…KPDS), 94-106 (RAAE…DYVP), and 114-153 (DRGT…EELR).

This sequence belongs to the TFS-II family. TFA subfamily.

The protein resides in the nucleus. Functionally, may be involved in transcriptional regulation. This is Transcription elongation factor A protein-like 3 (Tceal3) from Mus musculus (Mouse).